The primary structure comprises 110 residues: UPF0339 protein PA0329 (110 aa).

Repeat copies occupy residues Ala-10–Val-58 and Ala-61–Glu-109. The tract at residues Glu-91 to Ser-110 is disordered.

Belongs to the UPF0339 family. Duplicated subfamily.

This is UPF0339 protein PA0329 from Pseudomonas aeruginosa (strain ATCC 15692 / DSM 22644 / CIP 104116 / JCM 14847 / LMG 12228 / 1C / PRS 101 / PAO1).